A 349-amino-acid chain; its full sequence is DNA polymerase IV (349 aa).

Residues 4-185 (IIHIDCDCFY…LPVAKLHGVG (182 aa)) enclose the UmuC domain. Mg(2+) is bound by residues aspartate 8 and aspartate 103. Glutamate 104 is a catalytic residue.

It belongs to the DNA polymerase type-Y family. Monomer. The cofactor is Mg(2+).

It localises to the cytoplasm. The enzyme catalyses DNA(n) + a 2'-deoxyribonucleoside 5'-triphosphate = DNA(n+1) + diphosphate. Poorly processive, error-prone DNA polymerase involved in untargeted mutagenesis. Copies undamaged DNA at stalled replication forks, which arise in vivo from mismatched or misaligned primer ends. These misaligned primers can be extended by PolIV. Exhibits no 3'-5' exonuclease (proofreading) activity. May be involved in translesional synthesis, in conjunction with the beta clamp from PolIII. The protein is DNA polymerase IV of Pseudomonas paraeruginosa (strain DSM 24068 / PA7) (Pseudomonas aeruginosa (strain PA7)).